The chain runs to 381 residues: Deoxyguanosinetriphosphate triphosphohydrolase-like protein (381 aa).

The HD domain maps to 76-203 (RMTHTLEVAG…ADLSDEIAYT (128 aa)).

This sequence belongs to the dGTPase family. Type 2 subfamily.

This Leptospira borgpetersenii serovar Hardjo-bovis (strain JB197) protein is Deoxyguanosinetriphosphate triphosphohydrolase-like protein.